Consider the following 483-residue polypeptide: Regulatory protein ViaA (483 aa).

The protein belongs to the ViaA family. As to quaternary structure, homodimer. Interacts with RavA.

Its subcellular location is the cytoplasm. In terms of biological role, component of the RavA-ViaA chaperone complex, which may act on the membrane to optimize the function of some of the respiratory chains. ViaA stimulates the ATPase activity of RavA. The protein is Regulatory protein ViaA of Escherichia coli O7:K1 (strain IAI39 / ExPEC).